The chain runs to 348 residues: Dihydroorotase (348 aa).

Zn(2+) contacts are provided by histidine 13 and histidine 15. Substrate-binding positions include histidine 15–arginine 17 and asparagine 41. Lysine 99, histidine 136, and histidine 174 together coordinate Zn(2+). Lysine 99 is modified (N6-carboxylysine). Residue histidine 136 coordinates substrate. Leucine 219 lines the substrate pocket. Position 247 (aspartate 247) interacts with Zn(2+). Aspartate 247 is a catalytic residue. Substrate contacts are provided by histidine 251 and alanine 263.

The protein belongs to the metallo-dependent hydrolases superfamily. DHOase family. Class II DHOase subfamily. Homodimer. Zn(2+) is required as a cofactor.

It catalyses the reaction (S)-dihydroorotate + H2O = N-carbamoyl-L-aspartate + H(+). It functions in the pathway pyrimidine metabolism; UMP biosynthesis via de novo pathway; (S)-dihydroorotate from bicarbonate: step 3/3. Catalyzes the reversible cyclization of carbamoyl aspartate to dihydroorotate. This Rhizobium etli (strain ATCC 51251 / DSM 11541 / JCM 21823 / NBRC 15573 / CFN 42) protein is Dihydroorotase.